We begin with the raw amino-acid sequence, 548 residues long: Glucan endo-1,3-beta-glucosidase (548 aa).

The tat-type signal signal peptide spans 1-36; sequence MPHDRKNSSRRAWAALCAAVLAVSGALVGVAAPASA. The GH64 domain occupies 38–396; the sequence is PATIPLTITN…PQAAYIKLDP (359 aa). Glutamate 153 acts as the Proton donor in catalysis. Aspartate 169 functions as the Proton acceptor in the catalytic mechanism. The 127-residue stretch at 422 to 548 folds into the Ricin B-type lectin domain; sequence GTGALRIGST…NQTEAQRWTL (127 aa).

It belongs to the glycosyl hydrolase 64 family. In terms of processing, predicted to be exported by the Tat system. The position of the signal peptide cleavage has not been experimentally proven.

It localises to the periplasm. It catalyses the reaction Hydrolysis of (1-&gt;3)-beta-D-glucosidic linkages in (1-&gt;3)-beta-D-glucans.. Functionally, lysis of cellular walls containing beta-1,3-glucans. Implicated in the defense against fungal pathogens. This chain is Glucan endo-1,3-beta-glucosidase (glcI), found in Arthrobacter sp. (strain YCWD3).